Here is a 553-residue protein sequence, read N- to C-terminus: Glutamate--tRNA ligase (553 aa).

Positions 98-108 (PNPSGPLHIGH) match the 'HIGH' region motif.

The protein belongs to the class-I aminoacyl-tRNA synthetase family. Glutamate--tRNA ligase type 2 subfamily.

Its subcellular location is the cytoplasm. The enzyme catalyses tRNA(Glu) + L-glutamate + ATP = L-glutamyl-tRNA(Glu) + AMP + diphosphate. Catalyzes the attachment of glutamate to tRNA(Glu) in a two-step reaction: glutamate is first activated by ATP to form Glu-AMP and then transferred to the acceptor end of tRNA(Glu). The chain is Glutamate--tRNA ligase from Methanocaldococcus jannaschii (strain ATCC 43067 / DSM 2661 / JAL-1 / JCM 10045 / NBRC 100440) (Methanococcus jannaschii).